A 650-amino-acid chain; its full sequence is Phosphatidylinositol 4-kinase gamma 7 (650 aa).

The 58-residue stretch at 46-103 (RRVFVQTETGCVLGMELDRSDNVHTVKRRLQIALNFPTEESSLTYGDMVLTNDLSAVR) folds into the Ubiquitin-like; degenerate domain. The PI3K/PI4K catalytic domain maps to 166 to 463 (GVEPLPVHSG…SVTERDVFSP (298 aa)). The G-loop stretch occupies residues 172–178 (VHSGLGG). ATP-binding positions include 173-179 (HSGLGGA), lysine 194, and 283-286 (QKFV). A catalytic loop region spans residues 316–324 (FNTDRHGGN). Residues 343–369 (PIDHGLCLPETLEDPYFEWIHWPQASL) are activation loop. Aspartate 345 contributes to the ATP binding site. Disordered regions lie at residues 508-534 (SLGK…ENTV) and 560-595 (STSM…KSAN). Residues 516-529 (IKEEEEDEEEEEDK) show a composition bias toward acidic residues. 2 stretches are compositionally biased toward polar residues: residues 560–569 (STSMKNTHLS) and 585–595 (ENTSSGHKSAN). Serine 593 carries the post-translational modification Phosphoserine.

This sequence belongs to the PI3/PI4-kinase family. Type II PI4K subfamily.

It carries out the reaction a 1,2-diacyl-sn-glycero-3-phospho-(1D-myo-inositol) + ATP = a 1,2-diacyl-sn-glycero-3-phospho-(1D-myo-inositol 4-phosphate) + ADP + H(+). Functionally, the phosphorylation of phosphatidylinositol (PI) to PI4P is the first committed step in the generation of phosphatidylinositol 4,5-bisphosphate (PIP2), a precursor of the second messenger inositol 1,4,5-trisphosphate (InsP3). Undergoes autophosphorylation and phosphorylates serine/threonine residues of protein substrates. In Arabidopsis thaliana (Mouse-ear cress), this protein is Phosphatidylinositol 4-kinase gamma 7.